The chain runs to 115 residues: DNA-directed RNA polymerase subunit omega (115 aa).

Belongs to the RNA polymerase subunit omega family. The RNAP catalytic core consists of 2 alpha, 1 beta, 1 beta' and 1 omega subunit. When a sigma factor is associated with the core the holoenzyme is formed, which can initiate transcription.

The enzyme catalyses RNA(n) + a ribonucleoside 5'-triphosphate = RNA(n+1) + diphosphate. Its function is as follows. Promotes RNA polymerase assembly. Latches the N- and C-terminal regions of the beta' subunit thereby facilitating its interaction with the beta and alpha subunits. This Cutibacterium acnes (strain DSM 16379 / KPA171202) (Propionibacterium acnes) protein is DNA-directed RNA polymerase subunit omega.